The following is a 115-amino-acid chain: UPF0122 protein lp_1634 (115 aa).

The protein belongs to the UPF0122 family.

Might take part in the signal recognition particle (SRP) pathway. This is inferred from the conservation of its genetic proximity to ftsY/ffh. May be a regulatory protein. The sequence is that of UPF0122 protein lp_1634 from Lactiplantibacillus plantarum (strain ATCC BAA-793 / NCIMB 8826 / WCFS1) (Lactobacillus plantarum).